The primary structure comprises 427 residues: UDP-N-acetylglucosamine 1-carboxyvinyltransferase (427 aa).

Residue 24–25 coordinates phosphoenolpyruvate; the sequence is KN. Arg95 is a binding site for UDP-N-acetyl-alpha-D-glucosamine. Cys119 (proton donor) is an active-site residue. A 2-(S-cysteinyl)pyruvic acid O-phosphothioketal modification is found at Cys119. UDP-N-acetyl-alpha-D-glucosamine-binding positions include 124-128, Asp308, and Val330; that span reads RPVDQ.

Belongs to the EPSP synthase family. MurA subfamily.

The protein localises to the cytoplasm. It catalyses the reaction phosphoenolpyruvate + UDP-N-acetyl-alpha-D-glucosamine = UDP-N-acetyl-3-O-(1-carboxyvinyl)-alpha-D-glucosamine + phosphate. It participates in cell wall biogenesis; peptidoglycan biosynthesis. Functionally, cell wall formation. Adds enolpyruvyl to UDP-N-acetylglucosamine. In Deinococcus geothermalis (strain DSM 11300 / CIP 105573 / AG-3a), this protein is UDP-N-acetylglucosamine 1-carboxyvinyltransferase.